Reading from the N-terminus, the 237-residue chain is NAD(P)H-quinone oxidoreductase subunit K (237 aa).

[4Fe-4S] cluster-binding residues include cysteine 52, cysteine 53, cysteine 117, and cysteine 148.

It belongs to the complex I 20 kDa subunit family. As to quaternary structure, NDH-1 can be composed of about 15 different subunits; different subcomplexes with different compositions have been identified which probably have different functions. Requires [4Fe-4S] cluster as cofactor.

The protein resides in the cellular thylakoid membrane. The enzyme catalyses a plastoquinone + NADH + (n+1) H(+)(in) = a plastoquinol + NAD(+) + n H(+)(out). It carries out the reaction a plastoquinone + NADPH + (n+1) H(+)(in) = a plastoquinol + NADP(+) + n H(+)(out). In terms of biological role, NDH-1 shuttles electrons from an unknown electron donor, via FMN and iron-sulfur (Fe-S) centers, to quinones in the respiratory and/or the photosynthetic chain. The immediate electron acceptor for the enzyme in this species is believed to be plastoquinone. Couples the redox reaction to proton translocation, and thus conserves the redox energy in a proton gradient. Cyanobacterial NDH-1 also plays a role in inorganic carbon-concentration. The chain is NAD(P)H-quinone oxidoreductase subunit K from Thermosynechococcus vestitus (strain NIES-2133 / IAM M-273 / BP-1).